The following is a 115-amino-acid chain: Tyrosine-protein phosphatase 23 (115 aa).

The Tyrosine-protein phosphatase domain maps to 1 to 115 (WMMIVEQKCR…EIGGDAPMVV (115 aa)). Asp83 lines the substrate pocket.

It belongs to the protein-tyrosine phosphatase family.

It catalyses the reaction O-phospho-L-tyrosyl-[protein] + H2O = L-tyrosyl-[protein] + phosphate. The chain is Tyrosine-protein phosphatase 23 (STY-23) from Styela plicata (Wrinkled sea squirt).